We begin with the raw amino-acid sequence, 592 residues long: Autophagy-related protein 22-1 (592 aa).

A run of 4 helical transmembrane segments spans residues 31-51, 108-128, 143-163, and 167-187; these read YGWAAEVFVVCAMGSFLPITL, TASFALYTFSLSVLVQAVIII, LLIVFAFIGSIATMLFLVVVP, and LLGGLLAIISNTCFGASFVLL. An N-linked (GlcNAc...) asparagine glycan is attached at Asn213. Transmembrane regions (helical) follow at residues 271 to 291, 301 to 321, 364 to 384, 398 to 418, 433 to 453, 468 to 490, 502 to 524, and 534 to 554; these read IGIGYIGAVILQVISILVVVV, LVLFLIGLWWFVFTIPASLWL, IVIFLAAWFLLSDGIATVSGT, AALGLINVIVMLAGVFGAFSW, IIACIILFELIPLYGLLGFIP, MYPLGALYGLVMGGLSSYCRSFF, FYALYAITDKGSSIFGPAIVGAI, and AFVFLAVLIFVPLPLMLLVDV. Positions 572 to 592 are disordered; that stretch reads PQGSEYGAISDDQTTEDPIEE.

The protein belongs to the ATG22 family.

Its subcellular location is the vacuole membrane. Functionally, vacuolar effluxer which mediate the efflux of amino acids resulting from autophagic degradation. The release of autophagic amino acids allows the maintenance of protein synthesis and viability during nitrogen starvation. This chain is Autophagy-related protein 22-1 (atg22-1), found in Penicillium rubens (strain ATCC 28089 / DSM 1075 / NRRL 1951 / Wisconsin 54-1255) (Penicillium chrysogenum).